Here is a 189-residue protein sequence, read N- to C-terminus: Cytochrome b6-f complex subunit 4 (189 aa).

Transmembrane regions (helical) follow at residues 36–56 (LSYI…GLAV), 103–123 (LLGV…PFLE), and 139–159 (TVSL…ALPI).

This sequence belongs to the cytochrome b family. PetD subfamily. The 4 large subunits of the cytochrome b6-f complex are cytochrome b6, subunit IV (17 kDa polypeptide, petD), cytochrome f and the Rieske protein, while the 4 small subunits are petG, petL, petM and petN. The complex functions as a dimer.

It localises to the plastid. It is found in the chloroplast thylakoid membrane. Component of the cytochrome b6-f complex, which mediates electron transfer between photosystem II (PSII) and photosystem I (PSI), cyclic electron flow around PSI, and state transitions. This Pinus koraiensis (Korean pine) protein is Cytochrome b6-f complex subunit 4.